A 323-amino-acid polypeptide reads, in one-letter code: uncharacterized protein (323 aa).

The signal sequence occupies residues methionine 1 to alanine 45. The interval phenylalanine 186–valine 227 is disordered. Helical transmembrane passes span serine 269 to threonine 289 and alanine 290 to valine 310.

It localises to the cell membrane. This is an uncharacterized protein from Mycobacterium tuberculosis (strain CDC 1551 / Oshkosh).